The sequence spans 137 residues: MVVVNAENAVVGRLASYVAKLALSGEEITVVNAEKAIMTGNKEYIFQKYVQLRTRKSISNPKKMGPKYPRRPDDIVRRVIRGMLPYKKPRGVEAFKKIKIEVGVPEGVSIDINLGSAPNTIKYVTVGELSQFLGAKF.

Belongs to the universal ribosomal protein uL13 family. As to quaternary structure, part of the 50S ribosomal subunit.

This protein is one of the early assembly proteins of the 50S ribosomal subunit, although it is not seen to bind rRNA by itself. It is important during the early stages of 50S assembly. This Methanococcus maripaludis (strain DSM 14266 / JCM 13030 / NBRC 101832 / S2 / LL) protein is Large ribosomal subunit protein uL13.